The primary structure comprises 80 residues: Exodeoxyribonuclease 7 small subunit (80 aa).

This sequence belongs to the XseB family. As to quaternary structure, heterooligomer composed of large and small subunits.

The protein localises to the cytoplasm. It carries out the reaction Exonucleolytic cleavage in either 5'- to 3'- or 3'- to 5'-direction to yield nucleoside 5'-phosphates.. In terms of biological role, bidirectionally degrades single-stranded DNA into large acid-insoluble oligonucleotides, which are then degraded further into small acid-soluble oligonucleotides. This Rickettsia akari (strain Hartford) protein is Exodeoxyribonuclease 7 small subunit.